The primary structure comprises 175 residues: Chromobox protein homolog hpl-2 (175 aa).

The 60-residue stretch at 19 to 78 (FMVEKVLDKRTGKAGRDEFLIQWQGFPESDSSWEPRENLQCVEMLDEFEREFSKREKPIR) folds into the Chromo domain. The interval 71-109 (SKREKPIRKRHSQKPEPSEDQADPEEDKDEKKETNQNDK) is disordered. Over residues 88–98 (SEDQADPEEDK) the composition is skewed to acidic residues. Positions 99 to 109 (DEKKETNQNDK) are enriched in basic and acidic residues. A Chromo 2; shadow subtype domain is found at 115 to 172 (KQLKCIVGLTKGPGELHFLCKFSDDTARLLPAKEVNSRYPSQVIRYYESKLTIQDPKA).

Interacts with histone H3 when di-, or tri-methylated at 'Lys-27' (H3K27me2/me3), or tri-methylated at 'Lys-9' (H3K9me3). Interacts with Tar DNA-binding protein homolog tdp-1; interaction may maintain localization of hpl-2 to gene bodies. Interacts with histone H1 his-24, probably via interaction with hpl-1. Interacts with chromobox protein homolog hpl-1. As to quaternary structure, may form homodimers. Interacts (via chromo (shadow subtype) domain) with zinc finger protein lin-13 (via PLVPV motif); the interaction is direct and influences localization of hpl-2 to nuclear foci.

The protein localises to the nucleus. It localises to the chromosome. In terms of biological role, seems to be involved in transcriptional silencing in heterochromatin-like complexes. Probably does not act as global transcriptional repressor, instead targeting a subset of genes. Involved in RNA processing mediated by Tar DNA-binding protein homolog tdp-1. Plays a role in linking epigenetic regulation with the innate immune response. Involved in the endoplasmic reticulum (ER) stress response via modulation of the unfolded protein response (UPR), acting mainly through the IRE1-XBP1 pathway and perhaps, to a lesser extent, through the autophagy pathway. May act in a common pathway with retinoblastoma-like protein homolog lin-35 and zinc finger protein lin-13 to influence the ER stress response in the intestine. Plays a role in the formation of the vulva and in fertility, acting together with a CoREST-like complex, and chromobox protein homolog hpl-1. Acting in concert with hpl-1 and histone H1 protein his-24, involved in reproduction, somatic gonad development, male tail development and vulval cell fate specification; perhaps as a result of modulating expression of Hox genes mab-5 and egl-5. In vulval cell fate specification may act by repressing transcription, of EGF family gene lin-3 in hypodermal hyp7, and of homeobox lin-39 in vulval precursor cells (VPC). Role in growth and somatic gonad development is antagonized by histone-lysine N-methyltransferase set-2/SET1. Required for larval development, acting redundantly with hpl-1. Plays a role in regulation of the developmentally arrested larval state known as dauer, longevity, and lipid metabolism. This is Chromobox protein homolog hpl-2 from Caenorhabditis elegans.